A 502-amino-acid polypeptide reads, in one-letter code: T-complex protein 11-like X-linked protein 1 (502 aa).

Residues 1-36 form a disordered region; the sequence is MPKTEETVLQNDPSVAENGAPEPKTPGQSQKSKSFC.

The protein belongs to the TCP11 family.

This Homo sapiens (Human) protein is T-complex protein 11-like X-linked protein 1.